The primary structure comprises 20 residues: Small ribosomal subunit protein bS20 (20 aa).

This sequence belongs to the bacterial ribosomal protein bS20 family.

Its function is as follows. Binds directly to 16S ribosomal RNA. This Brevundimonas diminuta (Pseudomonas diminuta) protein is Small ribosomal subunit protein bS20 (rpsT).